A 307-amino-acid chain; its full sequence is Probable protein S-acyltransferase 14 (307 aa).

2 helical membrane passes run 22–42 and 63–83; these read LGSIMILLVLGVVGVTYYAVV and ILILFHFLLAMLLWSYFSVVF. The region spanning 127–177 is the DHHC domain; sequence RFCRKCNQLKPSRCHHCSVCGRCVLKMDHHCVWVVNCVGALNYKYFLLFLF. Cys-157 acts as the S-palmitoyl cysteine intermediate in catalysis. 2 helical membrane passes run 171-191 and 213-233; these read YFLLFLFYTFLETTLVTLVLM and TFLAFVLNLAFALSVMGFLIM.

Belongs to the DHHC palmitoyltransferase family.

It is found in the golgi apparatus. Its subcellular location is the trans-Golgi network membrane. It catalyses the reaction L-cysteinyl-[protein] + hexadecanoyl-CoA = S-hexadecanoyl-L-cysteinyl-[protein] + CoA. In terms of biological role, palmitoyl acyltransferase. This chain is Probable protein S-acyltransferase 14 (PAT14), found in Arabidopsis thaliana (Mouse-ear cress).